A 322-amino-acid chain; its full sequence is UDP-galactose transporter homolog 1 (322 aa).

A run of 5 helical transmembrane segments spans residues 4-24 (FMRQ…SWAV), 43-63 (ALLS…WNWF), 76-96 (FLGY…FGYA), 105-125 (TVIL…VFVY), and 129-149 (FPPH…IFSY). N152 is a glycosylation site (N-linked (GlcNAc...) asparagine). 4 helical membrane passes run 164–184 (SPIG…TNTT), 199–219 (MMIA…ISPF), 250–270 (LFIF…ITLT), and 290–310 (IQWL…GLKI). 2 N-linked (GlcNAc...) asparagine glycosylation sites follow: N313 and N314.

This sequence belongs to the nucleotide-sugar transporter family. SLC35B subfamily.

It is found in the endoplasmic reticulum membrane. May be involved in specific transport of UDP-Gal from the cytosol to the Golgi lumen. Involved in the maintenance of optimal conditions for the folding of secretory pathway proteins in the endoplasmic reticulum. In Schizosaccharomyces pombe (strain 972 / ATCC 24843) (Fission yeast), this protein is UDP-galactose transporter homolog 1 (hut1).